A 370-amino-acid polypeptide reads, in one-letter code: UDP-N-acetylglucosamine--N-acetylmuramyl-(pentapeptide) pyrophosphoryl-undecaprenol N-acetylglucosamine transferase (370 aa).

UDP-N-acetyl-alpha-D-glucosamine contacts are provided by residues 15–17 (TGG), Asn126, Arg169, Ser197, and Gln299.

The protein belongs to the glycosyltransferase 28 family. MurG subfamily.

The protein localises to the cell inner membrane. The enzyme catalyses di-trans,octa-cis-undecaprenyl diphospho-N-acetyl-alpha-D-muramoyl-L-alanyl-D-glutamyl-meso-2,6-diaminopimeloyl-D-alanyl-D-alanine + UDP-N-acetyl-alpha-D-glucosamine = di-trans,octa-cis-undecaprenyl diphospho-[N-acetyl-alpha-D-glucosaminyl-(1-&gt;4)]-N-acetyl-alpha-D-muramoyl-L-alanyl-D-glutamyl-meso-2,6-diaminopimeloyl-D-alanyl-D-alanine + UDP + H(+). It participates in cell wall biogenesis; peptidoglycan biosynthesis. Functionally, cell wall formation. Catalyzes the transfer of a GlcNAc subunit on undecaprenyl-pyrophosphoryl-MurNAc-pentapeptide (lipid intermediate I) to form undecaprenyl-pyrophosphoryl-MurNAc-(pentapeptide)GlcNAc (lipid intermediate II). In Methylorubrum populi (strain ATCC BAA-705 / NCIMB 13946 / BJ001) (Methylobacterium populi), this protein is UDP-N-acetylglucosamine--N-acetylmuramyl-(pentapeptide) pyrophosphoryl-undecaprenol N-acetylglucosamine transferase.